Here is a 250-residue protein sequence, read N- to C-terminus: DNA repair protein RecO (250 aa).

This sequence belongs to the RecO family.

Involved in DNA repair and RecF pathway recombination. This chain is DNA repair protein RecO, found in Staphylococcus aureus (strain COL).